Reading from the N-terminus, the 465-residue chain is UDP-N-acetylmuramate--L-alanine ligase (465 aa).

114–120 (GTHGKTT) contacts ATP.

Belongs to the MurCDEF family.

It localises to the cytoplasm. The enzyme catalyses UDP-N-acetyl-alpha-D-muramate + L-alanine + ATP = UDP-N-acetyl-alpha-D-muramoyl-L-alanine + ADP + phosphate + H(+). It functions in the pathway cell wall biogenesis; peptidoglycan biosynthesis. Its function is as follows. Cell wall formation. The sequence is that of UDP-N-acetylmuramate--L-alanine ligase from Chlorobium phaeobacteroides (strain BS1).